A 245-amino-acid polypeptide reads, in one-letter code: Probable transcriptional regulatory protein LVIS_1199 (245 aa).

Residues 1-23 (MSGHSKWHNIQGRKNAQDAKRGK) are disordered.

This sequence belongs to the TACO1 family.

It is found in the cytoplasm. This Levilactobacillus brevis (strain ATCC 367 / BCRC 12310 / CIP 105137 / JCM 1170 / LMG 11437 / NCIMB 947 / NCTC 947) (Lactobacillus brevis) protein is Probable transcriptional regulatory protein LVIS_1199.